A 569-amino-acid polypeptide reads, in one-letter code: MTSSAVPSLFRLSFLLFTLQVMNIGRIGAATRFYQFKVQTIRLTRLCQTNEIVTVNKKFPGPAISAQEDDRIVIKVINMTPYNTTIHWHGIKQKRSCWYDGPSYITQCPIQSGQSFTYNFKVAQQKGTFLWHAHFSWLRATVYGPLIVYPKASVPYPFKKPFNEHTILLGEYWLKNVVELEQHVLESGGPPPPADAFTINGQPGPNYNCSSKDVYEIQIVPRKIYLLRLINAGINMETFFTIANHRLTIVEVDGEYTKPYTTERVMLVPGQTMNILVTADQTVGRYSMAMGPYESAKNVKFQNTSAIANFQYIGALPNNVTVPAKLPIFNDNIAVKTVMDGLRSLNAVDVPRNIDAHLFITIGLNVNKCNSENPNNKCQGPRKGRLAASMNNISFIEPKVSILEAYYKQLEGYFTLDFPTTPEKAYDFVNGAPNDIANDTQAANGTRAIVFEYGSRIQIIFQNTGTLTTENHPIHLHGHSFYVIGYGTGNYDQQTAKFNLEDPPYLNTIGVPVGGWAAIRFVANNPGLWLLHCHFDIHQTWGMSTMFIVKNGKKVQESLPHPPADLPKC.

The N-terminal stretch at Met-1–Ala-29 is a signal peptide. 2 consecutive Plastocyanin-like domains span residues Lys-37–Ser-153 and Asn-163–Ala-315. A glycan (N-linked (GlcNAc...) asparagine) is linked at Asn-83. Cu cation is bound by residues His-87, His-89, His-132, and His-134. 6 N-linked (GlcNAc...) asparagine glycosylation sites follow: Asn-208, Asn-303, Asn-319, Asn-392, Asn-438, and Asn-444. The Plastocyanin-like 3 domain occupies Asp-417–Lys-553. 8 residues coordinate Cu cation: His-472, His-475, His-477, His-532, Cys-533, His-534, His-538, and Met-543.

Belongs to the multicopper oxidase family. It depends on Cu cation as a cofactor. Predominantly expressed in the inflorescence stem, but not in siliques.

It localises to the secreted. It is found in the extracellular space. Its subcellular location is the apoplast. It carries out the reaction 4 hydroquinone + O2 = 4 benzosemiquinone + 2 H2O. Its function is as follows. Lignin degradation and detoxification of lignin-derived products. In Arabidopsis thaliana (Mouse-ear cress), this protein is Laccase-6 (LAC6).